The sequence spans 77 residues: Small ribosomal subunit protein bS18 (77 aa).

Belongs to the bacterial ribosomal protein bS18 family. As to quaternary structure, part of the 30S ribosomal subunit. Forms a tight heterodimer with protein bS6.

Its function is as follows. Binds as a heterodimer with protein bS6 to the central domain of the 16S rRNA, where it helps stabilize the platform of the 30S subunit. The sequence is that of Small ribosomal subunit protein bS18 from Lactobacillus helveticus (strain DPC 4571).